A 202-amino-acid chain; its full sequence is Cilia- and flagella-associated protein 418 (202 aa).

Residues 71–90 form a disordered region; it reads DVDTPTSTHEPSPAKASSSA. Residues 74-90 are compositionally biased toward polar residues; it reads TPTSTHEPSPAKASSSA.

As to expression, ubiquitously expressed during early development and in adult tissues including the eye, brain, heart and kidney.

It localises to the cytoplasm. Its subcellular location is the photoreceptor inner segment. In terms of biological role, may be involved in photoreceptor outer segment disk morphogenesis. The sequence is that of Cilia- and flagella-associated protein 418 (cfap418) from Danio rerio (Zebrafish).